Reading from the N-terminus, the 387-residue chain is Yellow-related salivary protein ASP2 (387 aa).

A signal peptide spans 1-18 (MKIFLCLIVVVSLQGVLA).

This sequence belongs to the major royal jelly protein family. In terms of tissue distribution, female salivary gland (at protein level).

It is found in the secreted. In terms of biological role, probably modulates blood feeding of sand flies on vertebrate species by binding and sequestering different mediators involved in the host response. Binds biogenic amines. Binds octopamine with high affinity. Binds serotonin and dopamine with medium affinity. Poorly binds histamine. Does not bind noradrenaline and adrenaline. This chain is Yellow-related salivary protein ASP2, found in Phlebotomus orientalis (Phlebotomine sand fly).